The sequence spans 470 residues: N amino acid transport system protein (470 aa).

Basic and acidic residues predominate over residues 1 to 11 (MDSQYETKKND). The disordered stretch occupies residues 1 to 21 (MDSQYETKKNDPNAIMPYPES). Topologically, residues 1–56 (MDSQYETKKNDPNAIMPYPESNDEHVGEVRGLGGGIMDKEPEAQEGHAKFHRLGWK) are extracellular. 2 helical membrane-spanning segments follow: residues 57-77 (RLTV…LPGA) and 78-98 (FATL…LICI). Residues 99–131 (YTAHVIGQTKLKHPEIAHYADVGRVMFGRWGYE) are Extracellular-facing. A helical transmembrane segment spans residues 132–152 (IISFMFVLQLIFIVGSHVLTG). Over 153–168 (TIMWGTITDNGNGTCS) the chain is Cytoplasmic. The next 2 membrane-spanning stretches (helical) occupy residues 169–189 (LVFG…PSFA) and 191–211 (VAIL…ITMI). The Cytoplasmic portion of the chain corresponds to 212–236 (ATGIRSSHQEGGLAAVPWSCWPKED). The helical transmembrane segment at 237–257 (LSLAEGFIAVSNIVFAYSFAM) threads the bilayer. Topologically, residues 258–275 (CQFSFMDEMHTPSDYKKS) are extracellular. The helical transmembrane segment at 276 to 296 (IVALGLIEIFIYTVTGGVVYA) threads the bilayer. Topologically, residues 297–316 (FVGPEVQSPALLSAGPLLAK) are cytoplasmic. A helical transmembrane segment spans residues 317–337 (VAFGIALPVIFISGSINTVVV). Residues 338–357 (SRYLIERIWPNNVIRYVNTP) are Extracellular-facing. The helical transmembrane segment at 358–378 (AGWMVWLGFDFGITLIAWVIA) threads the bilayer. Residues 379-386 (EAIPFFSD) lie on the Cytoplasmic side of the membrane. A helical membrane pass occupies residues 387-407 (LLAICSALFISGFSFYFPALM). Over 408–427 (YFKITRNDAKSQGKKYFLDA) the chain is Extracellular. A helical transmembrane segment spans residues 428–448 (LNMLCFVIGMGILGIGTYAAI). The Cytoplasmic segment spans residues 449 to 470 (QDIMDRYDHGKVSKPYSCAPLA).

Belongs to the amino acid/polyamine transporter 2 family.

It localises to the membrane. In terms of biological role, required for the transport of neutral aliphatic and aromatic amino acids via the N system. The polypeptide is N amino acid transport system protein (mtr) (Neurospora crassa (strain ATCC 24698 / 74-OR23-1A / CBS 708.71 / DSM 1257 / FGSC 987)).